The following is a 257-amino-acid chain: Ribonuclease PH (257 aa).

Phosphate is bound by residues Arg-88 and 126–128; that span reads GTR.

Belongs to the RNase PH family. As to quaternary structure, homohexameric ring arranged as a trimer of dimers.

The catalysed reaction is tRNA(n+1) + phosphate = tRNA(n) + a ribonucleoside 5'-diphosphate. Phosphorolytic 3'-5' exoribonuclease that plays an important role in tRNA 3'-end maturation. Removes nucleotide residues following the 3'-CCA terminus of tRNAs; can also add nucleotides to the ends of RNA molecules by using nucleoside diphosphates as substrates, but this may not be physiologically important. Probably plays a role in initiation of 16S rRNA degradation (leading to ribosome degradation) during starvation. This chain is Ribonuclease PH, found in Nocardia farcinica (strain IFM 10152).